Here is a 621-residue protein sequence, read N- to C-terminus: Solute carrier family 2, facilitated glucose transporter member 12 (621 aa).

Residues 1–48 (MVPVENTEGPNLLNQKGTAVETEGSYRASGSRHPPWARGCGMFTFLSS) lie on the Cytoplasmic side of the membrane. The helical transmembrane segment at 49–69 (VTAAVSGLLVGYELGIISGAL) threads the bilayer. The Extracellular portion of the chain corresponds to 70 to 84 (LQIKTLLTLSCHEQE). The chain crosses the membrane as a helical span at residues 85–105 (MVVSSLLIGALLASLTGGVLI). The Cytoplasmic portion of the chain corresponds to 106–119 (DRYGRRTAIILSSC). The chain crosses the membrane as a helical span at residues 120–140 (LLGLGSLVLILSLSYTVLIVG). Position 141 (arginine 141) is a topological domain, extracellular. Residues 142–162 (IAIGVSISLSSIATCVYIAEI) traverse the membrane as a helical segment. Residues 163-176 (APQHRRGLLVSLNE) lie on the Cytoplasmic side of the membrane. The chain crosses the membrane as a helical span at residues 177–197 (LMIVIGILSAYISNYAFANVF). The Extracellular portion of the chain corresponds to 198–201 (HGWK). The helical transmembrane segment at 202-222 (YMFGLVIPLGILQAIAMYFLP) threads the bilayer. The Cytoplasmic segment spans residues 223-282 (PSPRFLVMKGQEGAASKVLGRLRALSDATEELTVIKSSLKDEYQYSFWDLFRSKDNMRTR). Residues 283–303 (IMIGLTLVFFVQITGQPNILF) traverse the membrane as a helical segment. Topologically, residues 304-321 (YASTVLKSVGFQSNEAAS) are extracellular. A helical membrane pass occupies residues 322–342 (LASTGVGVVKVISTIPATLLV). Topologically, residues 343 to 349 (DHVGSKT) are cytoplasmic. A helical transmembrane segment spans residues 350 to 370 (FLCIGSSVMAASLVTMGIVNL). Residues 371 to 470 (NIHMNFTNIC…PAFLKWLSLA (100 aa)) lie on the Extracellular side of the membrane. 4 N-linked (GlcNAc...) asparagine glycosylation sites follow: asparagine 375, asparagine 387, asparagine 400, and asparagine 405. Residues 471 to 491 (SLLVYVAAFSIGLGPMPWLVL) form a helical membrane-spanning segment. Over 492–502 (SEIFPGGIRGR) the chain is Cytoplasmic. A helical transmembrane segment spans residues 503-523 (AMALTSSMNWGINLLISLTFL). Residues 524–532 (TVTDLIGLP) lie on the Extracellular side of the membrane. Residues 533 to 553 (WVCFIYTIMSLASLLFVVMFI) traverse the membrane as a helical segment. At 554 to 621 (PETKGCSLEQ…GQSRQLSPEN (68 aa)) the chain is on the cytoplasmic side.

This sequence belongs to the major facilitator superfamily. Sugar transporter (TC 2.A.1.1) family. Glucose transporter subfamily.

It localises to the cell membrane. The protein resides in the endomembrane system. The protein localises to the cytoplasm. It is found in the perinuclear region. The catalysed reaction is D-glucose(out) = D-glucose(in). Functionally, insulin-independent facilitative glucose transporter. In Macaca fascicularis (Crab-eating macaque), this protein is Solute carrier family 2, facilitated glucose transporter member 12.